The primary structure comprises 362 residues: GTPase Obg (362 aa).

The Obg domain maps to 1–159 (MKFLDEAKVY…KTIWLRLKLI (159 aa)). The OBG-type G domain maps to 160-327 (ADAGLVGLPN…VLRALRDVIV (168 aa)). Residues 166-173 (GLPNAGKS), 191-195 (FTTLH), 212-215 (DIPG), 279-282 (SQID), and 308-310 (SAV) each bind GTP. Mg(2+)-binding residues include Ser173 and Thr193. The segment at 332–362 (EEKPAKVPKLRHRDMIVSDEGEGEDGADDQP) is disordered. The span at 348–362 (VSDEGEGEDGADDQP) shows a compositional bias: acidic residues.

The protein belongs to the TRAFAC class OBG-HflX-like GTPase superfamily. OBG GTPase family. Monomer. Mg(2+) serves as cofactor.

It localises to the cytoplasm. Functionally, an essential GTPase which binds GTP, GDP and possibly (p)ppGpp with moderate affinity, with high nucleotide exchange rates and a fairly low GTP hydrolysis rate. Plays a role in control of the cell cycle, stress response, ribosome biogenesis and in those bacteria that undergo differentiation, in morphogenesis control. This chain is GTPase Obg, found in Rhizobium etli (strain CIAT 652).